The sequence spans 354 residues: Rhodopsin (354 aa).

Over 1-36 (MNGTEGENFYIPMSNKTGVVRSPFDYPQYYLAEPWK) the chain is Extracellular. N2 and N15 each carry an N-linked (GlcNAc...) asparagine glycan. The chain crosses the membrane as a helical span at residues 37–61 (FSVLAAYMFFLIIAGFPVNFLTLYV). Topologically, residues 62–73 (TIQHKKLRQPLN) are cytoplasmic. The chain crosses the membrane as a helical span at residues 74-96 (YILLNLAVADLFMIFGGFPSTMI). Over 97-110 (TSMNGYFVFGPSGC) the chain is Extracellular. An intrachain disulfide couples C110 to C187. A helical membrane pass occupies residues 111-133 (NFEGFFATLGGEIGLWSLVVLAI). A 'Ionic lock' involved in activated form stabilization motif is present at residues 134-136 (ERY). At 134-152 (ERYVVVCKPMSNFRFGSQH) the chain is on the cytoplasmic side. Residues 153–173 (AFMGVGLTWIMAMACAFPPLV) traverse the membrane as a helical segment. Residues 174–202 (GWSRYIPEGMQCSCGIDYYTLKPEVNNES) are Extracellular-facing. An N-linked (GlcNAc...) asparagine glycan is attached at N200. A helical membrane pass occupies residues 203 to 224 (FVIYMFVVHFSIPLTIIFFCYG). The Cytoplasmic segment spans residues 225-252 (RLVCTVKEAAAQQQESETTQRAEREVTR). The helical transmembrane segment at 253–274 (MVIIMVIAFLICWLPYASVAFF) threads the bilayer. At 275–286 (IFCNQGSEFGPI) the chain is on the extracellular side. Residues 287 to 308 (FMTIPAFFAKAASLYNPLIYIL) form a helical membrane-spanning segment. K296 bears the N6-(retinylidene)lysine mark. Over 309–354 (MNKQFRNCMITTICCGKNPFEEEESTSASASKTEASSVSSSQVAPA) the chain is Cytoplasmic. S-palmitoyl cysteine attachment occurs at residues C322 and C323. Residues 333-354 (STSASASKTEASSVSSSQVAPA) form a disordered region. The segment covering 334–354 (TSASASKTEASSVSSSQVAPA) has biased composition (low complexity).

This sequence belongs to the G-protein coupled receptor 1 family. Opsin subfamily. Phosphorylated on some or all of the serine and threonine residues present in the C-terminal region. In terms of processing, contains one covalently linked retinal chromophore.

The protein resides in the membrane. The protein localises to the cell projection. Its subcellular location is the cilium. It localises to the photoreceptor outer segment. Photoreceptor required for image-forming vision at low light intensity. While most salt water fish species use retinal as chromophore, most freshwater fish use 3-dehydroretinal, or a mixture of retinal and 3-dehydroretinal. Light-induced isomerization of 11-cis to all-trans retinal triggers a conformational change that activates signaling via G-proteins. Subsequent receptor phosphorylation mediates displacement of the bound G-protein alpha subunit by arrestin and terminates signaling. This chain is Rhodopsin (rho), found in Scyliorhinus canicula (Small-spotted catshark).